Reading from the N-terminus, the 333-residue chain is MKGEAGHMLHNEKSKQEGYIWGSMRRTAFILGSGLLSFVAFWNSVTWHLQRFWGASGYFWQAQWERLLTTFEGKEWILFFIGAIQVPCLFFWSFNGLLLVVDTTGKPNFISRYRIQVGKNEPVDPVKLRQSIRTVLFNQCMVSFPMVVFLYPFLKWWGDPCRRELPTFHWFLLELAIFTLIEEVLFYYSHRLLHHPTFYKKIHKKHHEWTAPIGVISLYAHPIEHVVSNMLPAIVGPLVMGSHLSSITMWFSLALIITTISHCGYHLPFLPSPEFHDYHHLKFNQCYGVLGVLDHLHGTDTMFKQTKAYEKHVLLLGFTPLSESIPDSPKRMQ.

A run of 6 helical transmembrane segments spans residues 29 to 49 (FILG…TWHL), 77 to 97 (ILFF…FNGL), 134 to 154 (TVLF…YPFL), 168 to 188 (FHWF…LFYY), 215 to 235 (VISL…PAIV), and 237 to 257 (PLVM…ALII). A Fatty acid hydroxylase domain is found at 176 to 299 (AIFTLIEEVL…LGVLDHLHGT (124 aa)).

Belongs to the sterol desaturase family.

Its subcellular location is the cytoplasm. It is found in the membrane. Promotes megakaryocyte differentiation by enhancing ERK phosphorylation and up-regulating RUNX1 expression. In Macaca fascicularis (Crab-eating macaque), this protein is Fatty acid hydroxylase domain-containing protein 2 (FAXDC2).